The primary structure comprises 317 residues: Probable deoxyhypusine synthase 1 (317 aa).

Lysine 285 (nucleophile) is an active-site residue.

It belongs to the deoxyhypusine synthase family. It depends on NAD(+) as a cofactor.

It carries out the reaction [eIF5A protein]-L-lysine + spermidine = [eIF5A protein]-deoxyhypusine + propane-1,3-diamine. It participates in protein modification; eIF5A hypusination. Its function is as follows. Catalyzes the NAD-dependent oxidative cleavage of spermidine and the subsequent transfer of the butylamine moiety of spermidine to the epsilon-amino group of a specific lysine residue of the eIF-5A precursor protein to form the intermediate deoxyhypusine residue. The polypeptide is Probable deoxyhypusine synthase 1 (dys1) (Methanosarcina acetivorans (strain ATCC 35395 / DSM 2834 / JCM 12185 / C2A)).